Here is a 242-residue protein sequence, read N- to C-terminus: uncharacterized protein (242 aa).

An HTH gntR-type domain is found at 17 to 85 (QRVDERIATT…HGSGSVVRDP (69 aa)). The H-T-H motif DNA-binding region spans 45-64 (ERDLAERLGVNRTSLRQGLA).

This is an uncharacterized protein from Mycobacterium tuberculosis (strain ATCC 25618 / H37Rv).